An 81-amino-acid chain; its full sequence is Sulfur carrier protein TusA (81 aa).

The active-site Cysteine persulfide intermediate is the Cys19.

Belongs to the sulfur carrier protein TusA family.

It is found in the cytoplasm. Its function is as follows. Sulfur carrier protein which probably makes part of a sulfur-relay system. The protein is Sulfur carrier protein TusA of Shewanella sp. (strain ANA-3).